A 306-amino-acid polypeptide reads, in one-letter code: Glutamyl-Q tRNA(Asp) synthetase (306 aa).

Residues 29–33 (RFAPS) and Asp65 contribute to the L-glutamate site. Positions 32 to 42 (PSPTGPLHLGN) match the 'HIGH' region motif. 4 residues coordinate Zn(2+): Cys121, Cys123, Tyr141, and Cys145. Tyr188 and Arg206 together coordinate L-glutamate. The 'KMSKS' region motif lies at 244 to 248 (KLAKR). Residue Lys247 coordinates ATP.

Belongs to the class-I aminoacyl-tRNA synthetase family. GluQ subfamily. Zn(2+) is required as a cofactor.

In terms of biological role, catalyzes the tRNA-independent activation of glutamate in presence of ATP and the subsequent transfer of glutamate onto a tRNA(Asp). Glutamate is transferred on the 2-amino-5-(4,5-dihydroxy-2-cyclopenten-1-yl) moiety of the queuosine in the wobble position of the QUC anticodon. This chain is Glutamyl-Q tRNA(Asp) synthetase, found in Prochlorococcus marinus (strain MIT 9313).